The following is a 285-amino-acid chain: Eukaryotic translation initiation factor 2 subunit beta (285 aa).

Residues 30–69 (DAAVNGKENGSGDDLFAGLKKKKKKSKSVSADAEAEKEPT) are disordered. Serine 40 is modified (phosphoserine). Threonine 69 carries the post-translational modification Phosphothreonine. Serine 80, serine 92, and serine 112 each carry phosphoserine. Threonine 116 is modified (phosphothreonine). Serine 118 is subject to Phosphoserine. The segment at 236–262 (CKTCKSINTELKREQSNRLFFMVCKSC) adopts a C4-type zinc-finger fold.

Belongs to the eIF-2-beta/eIF-5 family. In terms of assembly, eukaryotic translation initiation factor 2 eIF2 is a heterotrimeric complex composed of an alpha, a beta and a gamma subunit. The factors eIF-1, eIF-2, eIF-3, TIF5/eIF-5 and methionyl-tRNAi form a multifactor complex (MFC) that may bind to the 40S ribosome. Interacts with GCD6. Interacts with GCD1. Interacts with TIF5/eIF-5. Interacts with CDC123.

Its subcellular location is the cytoplasm. The protein resides in the cytosol. In terms of biological role, component of the eIF2 complex that functions in the early steps of protein synthesis by forming a ternary complex with GTP and initiator tRNA. This complex binds to a 40S ribosomal subunit, followed by mRNA binding to form a 43S pre-initiation complex (43S PIC). Junction of the 60S ribosomal subunit to form the 80S initiation complex is preceded by hydrolysis of the GTP bound to eIF2 and release of an eIF2-GDP binary complex. In order for eIF2 to recycle and catalyze another round of initiation, the GDP bound to eIF2 must exchange with GTP by way of a reaction catalyzed by eIF2B. This Saccharomyces cerevisiae (strain ATCC 204508 / S288c) (Baker's yeast) protein is Eukaryotic translation initiation factor 2 subunit beta (SUI3).